The sequence spans 369 residues: uncharacterized protein (369 aa).

A signal peptide spans 1-19; it reads MKKLIAVAVLSACGSLAHA.

This is an uncharacterized protein from Haemophilus influenzae (strain ATCC 51907 / DSM 11121 / KW20 / Rd).